We begin with the raw amino-acid sequence, 247 residues long: Opacity protein opA52 (247 aa).

Alanine 1 is a signal peptide.

It belongs to the opacity porin family.

Its subcellular location is the cell outer membrane. Implicated in a number of adherence functions. OPA proteins are implicated in pathogenesis and are subject to phase variation. The polypeptide is Opacity protein opA52 (opaG) (Neisseria gonorrhoeae).